The primary structure comprises 143 residues: Endoribonuclease YbeY (143 aa).

Residues His-109, His-113, and Asp-119 each contribute to the Zn(2+) site.

The protein belongs to the endoribonuclease YbeY family. Requires Zn(2+) as cofactor.

Its subcellular location is the cytoplasm. In terms of biological role, single strand-specific metallo-endoribonuclease involved in late-stage 70S ribosome quality control and in maturation of the 3' terminus of the 16S rRNA. The chain is Endoribonuclease YbeY from Christiangramia forsetii (strain DSM 17595 / CGMCC 1.15422 / KT0803) (Gramella forsetii).